The chain runs to 85 residues: Large ribosomal subunit protein bL27 (85 aa).

Residues 1–23 are disordered; sequence MAHKKGQGSTQNNRDSAGRRLGV.

Belongs to the bacterial ribosomal protein bL27 family.

This chain is Large ribosomal subunit protein bL27, found in Aliarcobacter butzleri (strain RM4018) (Arcobacter butzleri).